Here is a 350-residue protein sequence, read N- to C-terminus: Histidinol-phosphate aminotransferase 1 (350 aa).

Lys210 bears the N6-(pyridoxal phosphate)lysine mark.

This sequence belongs to the class-II pyridoxal-phosphate-dependent aminotransferase family. Histidinol-phosphate aminotransferase subfamily. Homodimer. Pyridoxal 5'-phosphate is required as a cofactor.

The enzyme catalyses L-histidinol phosphate + 2-oxoglutarate = 3-(imidazol-4-yl)-2-oxopropyl phosphate + L-glutamate. It functions in the pathway amino-acid biosynthesis; L-histidine biosynthesis; L-histidine from 5-phospho-alpha-D-ribose 1-diphosphate: step 7/9. The polypeptide is Histidinol-phosphate aminotransferase 1 (Pseudomonas fluorescens (strain Pf0-1)).